The chain runs to 207 residues: Ribonuclease HII (207 aa).

Positions 10–199 constitute an RNase H type-2 domain; it reads RLIAGVDEVG…VRNALLDAEL (190 aa). 3 residues coordinate a divalent metal cation: D16, E17, and D108.

It belongs to the RNase HII family. Mn(2+) serves as cofactor. The cofactor is Mg(2+).

It localises to the cytoplasm. It catalyses the reaction Endonucleolytic cleavage to 5'-phosphomonoester.. Endonuclease that specifically degrades the RNA of RNA-DNA hybrids. The polypeptide is Ribonuclease HII (Erwinia tasmaniensis (strain DSM 17950 / CFBP 7177 / CIP 109463 / NCPPB 4357 / Et1/99)).